Here is a 220-residue protein sequence, read N- to C-terminus: FMN-dependent NADH:quinone oxidoreductase (220 aa).

FMN is bound by residues Ser-10, 17-19, and 136-139; these read SAS and SRGG. Residues 200 to 220 form a disordered region; sequence HSEAVTKAKELTERLTADNGR.

The protein belongs to the azoreductase type 1 family. As to quaternary structure, homodimer. FMN serves as cofactor.

The catalysed reaction is 2 a quinone + NADH + H(+) = 2 a 1,4-benzosemiquinone + NAD(+). It catalyses the reaction N,N-dimethyl-1,4-phenylenediamine + anthranilate + 2 NAD(+) = 2-(4-dimethylaminophenyl)diazenylbenzoate + 2 NADH + 2 H(+). Functionally, quinone reductase that provides resistance to thiol-specific stress caused by electrophilic quinones. Also exhibits azoreductase activity. Catalyzes the reductive cleavage of the azo bond in aromatic azo compounds to the corresponding amines. The protein is FMN-dependent NADH:quinone oxidoreductase of Streptomyces coelicolor (strain ATCC BAA-471 / A3(2) / M145).